We begin with the raw amino-acid sequence, 290 residues long: uncharacterized protein (290 aa).

This sequence belongs to the glycosyltransferase 2 family.

This is an uncharacterized protein from Methanocaldococcus jannaschii (strain ATCC 43067 / DSM 2661 / JAL-1 / JCM 10045 / NBRC 100440) (Methanococcus jannaschii).